Reading from the N-terminus, the 98-residue chain is Putative transcriptional regulator YdaS (98 aa).

Functionally, when overexpressed, it induces Rac prophage excision, possibly to counteract the lethal toxicity of YdaT. Overexpression of ydaS or ydaST reduces growth and leads to loss of cell viability. May contribute to toxicity and morphological defects. This is Putative transcriptional regulator YdaS (ydaS) from Escherichia coli (strain K12).